The primary structure comprises 423 residues: Putative competence-damage inducible protein (423 aa).

Belongs to the CinA family.

This is Putative competence-damage inducible protein from Streptococcus pyogenes serotype M2 (strain MGAS10270).